The sequence spans 98 residues: Cell cycle protein GpsB (98 aa).

Residues 34-71 adopt a coiled-coil conformation; sequence LDIVIKDYEAFQQELDELRQENARLKRQVEELQKRPTT.

The protein belongs to the GpsB family. In terms of assembly, forms polymers through the coiled coil domains. Interacts with PBP1, MreC and EzrA.

The protein resides in the cytoplasm. In terms of biological role, divisome component that associates with the complex late in its assembly, after the Z-ring is formed, and is dependent on DivIC and PBP2B for its recruitment to the divisome. Together with EzrA, is a key component of the system that regulates PBP1 localization during cell cycle progression. Its main role could be the removal of PBP1 from the cell pole after pole maturation is completed. Also contributes to the recruitment of PBP1 to the division complex. Not essential for septum formation. The sequence is that of Cell cycle protein GpsB from Geobacillus thermodenitrificans (strain NG80-2).